The following is a 261-amino-acid chain: Glutamate 5-kinase (261 aa).

Residue Lys-7 coordinates ATP. Substrate is bound by residues Ser-46, Asp-131, and Asn-147. ATP contacts are provided by residues 167 to 168 and 209 to 215; these read SD and TGGIVTK.

Belongs to the glutamate 5-kinase family.

The protein resides in the cytoplasm. It carries out the reaction L-glutamate + ATP = L-glutamyl 5-phosphate + ADP. It participates in amino-acid biosynthesis; L-proline biosynthesis; L-glutamate 5-semialdehyde from L-glutamate: step 1/2. Functionally, catalyzes the transfer of a phosphate group to glutamate to form L-glutamate 5-phosphate. The protein is Glutamate 5-kinase of Wolinella succinogenes (strain ATCC 29543 / DSM 1740 / CCUG 13145 / JCM 31913 / LMG 7466 / NCTC 11488 / FDC 602W) (Vibrio succinogenes).